A 152-amino-acid chain; its full sequence is Large ribosomal subunit protein bL9 (152 aa).

The protein belongs to the bacterial ribosomal protein bL9 family.

Binds to the 23S rRNA. In Prochlorococcus marinus (strain MIT 9211), this protein is Large ribosomal subunit protein bL9.